Consider the following 427-residue polypeptide: Adenylosuccinate synthetase (427 aa).

GTP-binding positions include 12–18 (GDEGKGK) and 40–42 (GHT). The active-site Proton acceptor is Asp13. Positions 13 and 40 each coordinate Mg(2+). IMP contacts are provided by residues 13–16 (DEGK), 38–41 (NAGH), Thr126, Arg140, Gln221, Thr236, and Arg299. The Proton donor role is filled by His41. 295-301 (STTKRPR) contributes to the substrate binding site. GTP is bound by residues Arg301, 327–329 (KLD), and 409–411 (SVG).

This sequence belongs to the adenylosuccinate synthetase family. As to quaternary structure, homodimer. It depends on Mg(2+) as a cofactor.

The protein resides in the cytoplasm. The catalysed reaction is IMP + L-aspartate + GTP = N(6)-(1,2-dicarboxyethyl)-AMP + GDP + phosphate + 2 H(+). Its pathway is purine metabolism; AMP biosynthesis via de novo pathway; AMP from IMP: step 1/2. Functionally, plays an important role in the de novo pathway of purine nucleotide biosynthesis. Catalyzes the first committed step in the biosynthesis of AMP from IMP. The chain is Adenylosuccinate synthetase from Borrelia recurrentis (strain A1).